The following is a 339-amino-acid chain: D-erythrose-4-phosphate dehydrogenase (339 aa).

NAD(+) is bound by residues 12–13 and R81; that span reads RI. Substrate-binding positions include 154-156, R200, 213-214, and R236; these read SCT and TK. The Nucleophile role is filled by C155. N318 provides a ligand contact to NAD(+).

This sequence belongs to the glyceraldehyde-3-phosphate dehydrogenase family. Epd subfamily. As to quaternary structure, homotetramer.

Its subcellular location is the cytoplasm. The enzyme catalyses D-erythrose 4-phosphate + NAD(+) + H2O = 4-phospho-D-erythronate + NADH + 2 H(+). It functions in the pathway cofactor biosynthesis; pyridoxine 5'-phosphate biosynthesis; pyridoxine 5'-phosphate from D-erythrose 4-phosphate: step 1/5. Functionally, catalyzes the NAD-dependent conversion of D-erythrose 4-phosphate to 4-phosphoerythronate. The sequence is that of D-erythrose-4-phosphate dehydrogenase from Escherichia coli (strain UTI89 / UPEC).